Reading from the N-terminus, the 538-residue chain is CWF19-like protein 1 (538 aa).

2 disordered regions span residues 259-278 (PDVT…TGKQ) and 298-324 (QGRK…PPQP).

This sequence belongs to the CWF19 family.

This is CWF19-like protein 1 (CWF19L1) from Pongo abelii (Sumatran orangutan).